We begin with the raw amino-acid sequence, 206 residues long: Potassium channel B446_29190 (206 aa).

M1 is a topological domain (cytoplasmic). A helical transmembrane segment spans residues 2-25 (NESGRVEAFSDGVFAIAITLLILD). The RxxxFSD motif signature appears at 6–12 (RVEAFSD). Over 26-44 (IKVPKADGPGGLWHALGAQ) the chain is Extracellular. Residues 31-34 (ADGP) form a short helix H1 region. The interval 36 to 42 (GLWHALG) is short helix H2. A helical transmembrane segment spans residues 45–70 (WPSYAAYVVSFLVIGIMWVNHHQVFS). Over 71–76 (YVARVD) the chain is Cytoplasmic. A helical transmembrane segment spans residues 77 to 102 (RALMFLNLLVLMVVAAVPWPTAMLAE). The Extracellular portion of the chain corresponds to 103–110 (YLREDRAS). Residues 111–135 (HVAAAVYSLVMVAMALAFQALWWHL) form a helical membrane-spanning segment. The Cytoplasmic portion of the chain corresponds to 136 to 147 (TRTGHLFDPRVD). Residues 148–174 (APAARATRIRFALGSLGYPLTVGLAFV) traverse the membrane as a helical segment. Over 175-176 (SA) the chain is Extracellular. The chain crosses the membrane as a helical span at residues 177-192 (PLTLAAHGLLALYYGF). The Cytoplasmic portion of the chain corresponds to 193–206 (NQVPVPTREAAAPS).

Belongs to the TMEM175 family. In terms of assembly, homotetramer.

The protein localises to the membrane. The catalysed reaction is K(+)(in) = K(+)(out). Potassium channel. The protein is Potassium channel B446_29190 of Streptomyces collinus (strain DSM 40733 / Tue 365).